A 142-amino-acid polypeptide reads, in one-letter code: Transcriptional regulator MraZ (142 aa).

SpoVT-AbrB domains lie at 5-51 (ASAL…PRPE) and 77-120 (AADV…DAAT).

It belongs to the MraZ family. As to quaternary structure, forms oligomers.

The protein localises to the cytoplasm. It localises to the nucleoid. The chain is Transcriptional regulator MraZ from Ralstonia pickettii (strain 12J).